The following is an 80-amino-acid chain: Protein YibX (80 aa).

The protein is Protein YibX of Escherichia coli (strain K12).